Consider the following 177-residue polypeptide: Interleukin-1 receptor antagonist protein (177 aa).

An N-terminal signal peptide occupies residues Met1–Cys25. Cysteines 91 and 141 form a disulfide. Asn109 carries an N-linked (GlcNAc...) asparagine glycan.

Belongs to the IL-1 family.

It is found in the secreted. In terms of biological role, anti-inflammatory antagonist of interleukin-1 family of proinflammatory cytokines such as interleukin-1beta/IL1B and interleukin-1alpha/IL1A. Protects from immune dysregulation and uncontrolled systemic inflammation triggered by IL1 for a range of innate stimulatory agents such as pathogens. This Sus scrofa (Pig) protein is Interleukin-1 receptor antagonist protein (IL1RN).